Consider the following 126-residue polypeptide: Holo-[acyl-carrier-protein] synthase (126 aa).

D9 and E58 together coordinate Mg(2+).

Belongs to the P-Pant transferase superfamily. AcpS family. The cofactor is Mg(2+).

Its subcellular location is the cytoplasm. The enzyme catalyses apo-[ACP] + CoA = holo-[ACP] + adenosine 3',5'-bisphosphate + H(+). Its function is as follows. Transfers the 4'-phosphopantetheine moiety from coenzyme A to a Ser of acyl-carrier-protein. The sequence is that of Holo-[acyl-carrier-protein] synthase from Shewanella denitrificans (strain OS217 / ATCC BAA-1090 / DSM 15013).